The primary structure comprises 125 residues: S-adenosylmethionine decarboxylase proenzyme (125 aa).

Serine 61 functions as the Schiff-base intermediate with substrate; via pyruvic acid in the catalytic mechanism. At serine 61 the chain carries Pyruvic acid (Ser); by autocatalysis. Histidine 66 acts as the Proton acceptor; for processing activity in catalysis. The active-site Proton donor; for catalytic activity is the cysteine 81.

It belongs to the prokaryotic AdoMetDC family. Type 1 subfamily. As to quaternary structure, heterotetramer of two alpha and two beta chains arranged as a dimer of alpha/beta heterodimers. It depends on pyruvate as a cofactor. Is synthesized initially as an inactive proenzyme. Formation of the active enzyme involves a self-maturation process in which the active site pyruvoyl group is generated from an internal serine residue via an autocatalytic post-translational modification. Two non-identical subunits are generated from the proenzyme in this reaction, and the pyruvate is formed at the N-terminus of the alpha chain, which is derived from the carboxyl end of the proenzyme. The post-translation cleavage follows an unusual pathway, termed non-hydrolytic serinolysis, in which the side chain hydroxyl group of the serine supplies its oxygen atom to form the C-terminus of the beta chain, while the remainder of the serine residue undergoes an oxidative deamination to produce ammonia and the pyruvoyl group blocking the N-terminus of the alpha chain.

The catalysed reaction is S-adenosyl-L-methionine + H(+) = S-adenosyl 3-(methylsulfanyl)propylamine + CO2. Its pathway is amine and polyamine biosynthesis; S-adenosylmethioninamine biosynthesis; S-adenosylmethioninamine from S-adenosyl-L-methionine: step 1/1. Catalyzes the decarboxylation of S-adenosylmethionine to S-adenosylmethioninamine (dcAdoMet), the propylamine donor required for the synthesis of the polyamines spermine and spermidine from the diamine putrescine. The protein is S-adenosylmethionine decarboxylase proenzyme of Prochlorococcus marinus (strain MIT 9313).